A 394-amino-acid polypeptide reads, in one-letter code: Growth-regulating factor 4 (394 aa).

The QLQ domain maps to 64-99; sequence PFTAAQYEELEQQALIYKYLVAGVPVPPDLVLPIRR. The region spanning 125 to 169 is the WRC domain; the sequence is DPEPGRCRRTDGKKWRCSKEAAPDSKYCERHMHRGRNRSRKPVET. 2 short sequence motifs (bipartite nuclear localization signal) span residues 130-140 and 158-165; these read RCRRTDGKKWR and RGRNRSRK. The segment at 156–180 is disordered; it reads MHRGRNRSRKPVETQLVAQSQPPSS. The segment covering 170 to 180 has biased composition (low complexity); that stretch reads QLVAQSQPPSS.

It belongs to the GRF family. As to quaternary structure, interacts with GIF1. Interacts with GSK2. As to expression, expressed in stems. Expressed in panicles.

It localises to the nucleus. Its activity is regulated as follows. Transactivation activity is repressed by GSK2. Transcription activator that plays a role in the regulation of meristematic function in leaves, stems and inflorescences. Transcription activator that plays a regulatory role in grain development. Positively regulates grain size by promoting cell division and expansion, leading to increased grain length and width. Positively regulates the expression of genes promoting cell proliferation. Activates the expression of expansin genes to promote cell expansion and grain size. May promote grain size by activating brassinosteroid responses. Component of a network formed by the microRNA396 (miRNA396), the GRFs and their interacting factors (GIFs) acting in the regulation of meristem function, at least partially through the control of cell proliferation. Component of the miRNA396c-GRF4-GIF1 regulatory module that plays an important role in grain size determination. In Oryza sativa subsp. japonica (Rice), this protein is Growth-regulating factor 4.